The primary structure comprises 202 residues: 3-isopropylmalate dehydratase small subunit (202 aa).

This sequence belongs to the LeuD family. LeuD type 1 subfamily. Heterodimer of LeuC and LeuD.

The catalysed reaction is (2R,3S)-3-isopropylmalate = (2S)-2-isopropylmalate. It participates in amino-acid biosynthesis; L-leucine biosynthesis; L-leucine from 3-methyl-2-oxobutanoate: step 2/4. In terms of biological role, catalyzes the isomerization between 2-isopropylmalate and 3-isopropylmalate, via the formation of 2-isopropylmaleate. In Buchnera aphidicola subsp. Pemphigus spyrothecae, this protein is 3-isopropylmalate dehydratase small subunit.